The following is a 511-amino-acid chain: MMKMRWLGAAIMLTLYASSSWAFSIDDVAKQAQSLAGKGYEAPKSNLPSVFRDMKYADYQQIQFNSDKAYWNNLKTPFKLEFYHQGMYFDTLVKINEVTATTVKRIKYSPDYFNFGNVQHDKDTVKDLGFAGFKVLYPINSKDKNDEIVSMLGASYFRVIGAGQVYGLSARGLAIDTALPSGEEFPRFREFWIERPKPTDKRLTVYALLDSPRATGAYRFVIIPGRDTVVDVQSKVYLRDKVGKLGVAPLTSMFLFGPNQPSPTTNYRPELHDSNGLSIHAGNGEWIWRPLNNPKHLAVSSYAMENPQGFGLLQRGREFSRFEDLDDRYDLRPSAWITPKGDWGKGKVELVEIPTNDETNDNIVAYWTPDQLPEPGKEMNFKYTLTFSRDEDKLHAPDNAWVLQTRRSTGDVKQSNLIRQPDGTIAFVVDFVGADMKKLPPDTPVAAQTSIGDNGEIVDSNVRYNPVTKGWRLMLRVKVKDAKKTTEMRAALVNADQTLSETWSYQLPANE.

Positions methionine 1–alanine 22 are cleaved as a signal peptide.

The protein belongs to the OpgD/OpgG family.

It localises to the periplasm. It functions in the pathway glycan metabolism; osmoregulated periplasmic glucan (OPG) biosynthesis. In terms of biological role, involved in the biosynthesis of osmoregulated periplasmic glucans (OPGs). This Salmonella paratyphi A (strain ATCC 9150 / SARB42) protein is Glucans biosynthesis protein G.